Consider the following 83-residue polypeptide: Cytochrome b559 subunit alpha (83 aa).

A helical membrane pass occupies residues 21-35 (VIHSITIPSLFIAGW). His23 serves as a coordination point for heme.

This sequence belongs to the PsbE/PsbF family. As to quaternary structure, heterodimer of an alpha subunit and a beta subunit. PSII is composed of 1 copy each of membrane proteins PsbA, PsbB, PsbC, PsbD, PsbE, PsbF, PsbH, PsbI, PsbJ, PsbK, PsbL, PsbM, PsbT, PsbX, PsbY, PsbZ, Psb30/Ycf12, at least 3 peripheral proteins of the oxygen-evolving complex and a large number of cofactors. It forms dimeric complexes. The cofactor is heme b.

It is found in the plastid. Its subcellular location is the chloroplast thylakoid membrane. In terms of biological role, this b-type cytochrome is tightly associated with the reaction center of photosystem II (PSII). PSII is a light-driven water:plastoquinone oxidoreductase that uses light energy to abstract electrons from H(2)O, generating O(2) and a proton gradient subsequently used for ATP formation. It consists of a core antenna complex that captures photons, and an electron transfer chain that converts photonic excitation into a charge separation. This chain is Cytochrome b559 subunit alpha, found in Anthoceros angustus (Hornwort).